Reading from the N-terminus, the 395-residue chain is Cystathionine beta-lyase MetC (395 aa).

The residue at position 210 (lysine 210) is an N6-(pyridoxal phosphate)lysine.

The protein belongs to the trans-sulfuration enzymes family. In terms of assembly, homotetramer; dimer of dimers. The cofactor is pyridoxal 5'-phosphate.

The protein localises to the cytoplasm. The catalysed reaction is L,L-cystathionine + H2O = L-homocysteine + pyruvate + NH4(+). The enzyme catalyses L-cysteine + H2O = hydrogen sulfide + pyruvate + NH4(+) + H(+). It catalyses the reaction an S-substituted L-cysteine + H2O = a thiol + pyruvate + NH4(+). Its pathway is amino-acid biosynthesis; L-methionine biosynthesis via de novo pathway; L-homocysteine from L-cystathionine: step 1/1. With respect to regulation, L-cysteine inhibits cystathionine beta-lyase activity competitively. Inhibited by aminoethoxyvinylglycine (AVG). Primarily catalyzes the cleavage of cystathionine to homocysteine, pyruvate and ammonia during methionine biosynthesis. Also exhibits cysteine desulfhydrase activity, producing sulfide from cysteine. In addition, under certain growth conditions, exhibits significant alanine racemase coactivity. The chain is Cystathionine beta-lyase MetC from Escherichia coli (strain K12).